We begin with the raw amino-acid sequence, 67 residues long: uncharacterized protein (67 aa).

The next 2 membrane-spanning stretches (helical) occupy residues 6–26 and 38–58; these read GQLW…CVLM and NNII…IIII.

Its subcellular location is the membrane. This is an uncharacterized protein from Dictyostelium discoideum (Social amoeba).